We begin with the raw amino-acid sequence, 273 residues long: Octanoyl-[GcvH]:protein N-octanoyltransferase (273 aa).

The BPL/LPL catalytic domain maps to 40–245 (ATEGAAIRSW…SLMELGATLT (206 aa)). Cysteine 144 (acyl-thioester intermediate) is an active-site residue.

Belongs to the octanoyltransferase LipL family.

The enzyme catalyses N(6)-octanoyl-L-lysyl-[glycine-cleavage complex H protein] + L-lysyl-[lipoyl-carrier protein] = N(6)-octanoyl-L-lysyl-[lipoyl-carrier protein] + L-lysyl-[glycine-cleavage complex H protein]. It functions in the pathway protein modification; protein lipoylation via endogenous pathway; protein N(6)-(lipoyl)lysine from octanoyl-[acyl-carrier-protein]. Functionally, catalyzes the amidotransfer (transamidation) of the octanoyl moiety from octanoyl-GcvH to the lipoyl domain of the E2 subunit of lipoate-dependent enzymes. This Exiguobacterium sibiricum (strain DSM 17290 / CCUG 55495 / CIP 109462 / JCM 13490 / 255-15) protein is Octanoyl-[GcvH]:protein N-octanoyltransferase.